Reading from the N-terminus, the 300-residue chain is D-alanine--D-alanine ligase (300 aa).

The ATP-grasp domain occupies 99–293 (KKILKYANIN…FAELLNSIVK (195 aa)). Residue 126–181 (IEKIGYPVFVKPNSGGSSVATNLVKDKEGIKEAVELALKYDKEVMIENYTKGEEIT) coordinates ATP. Mg(2+)-binding residues include Asp-248, Glu-260, and Asn-262.

It belongs to the D-alanine--D-alanine ligase family. It depends on Mg(2+) as a cofactor. Requires Mn(2+) as cofactor.

It is found in the cytoplasm. The enzyme catalyses 2 D-alanine + ATP = D-alanyl-D-alanine + ADP + phosphate + H(+). It functions in the pathway cell wall biogenesis; peptidoglycan biosynthesis. In terms of biological role, cell wall formation. The chain is D-alanine--D-alanine ligase from Clostridium botulinum (strain Okra / Type B1).